Here is a 336-residue protein sequence, read N- to C-terminus: tRNA N6-adenosine threonylcarbamoyltransferase (336 aa).

Residues His112 and His116 each contribute to the Fe cation site. Residues 136–140 (LVSGG), Asp169, Gly182, and Asn276 contribute to the substrate site. A Fe cation-binding site is contributed by Asp304.

Belongs to the KAE1 / TsaD family. Requires Fe(2+) as cofactor.

It is found in the cytoplasm. It catalyses the reaction L-threonylcarbamoyladenylate + adenosine(37) in tRNA = N(6)-L-threonylcarbamoyladenosine(37) in tRNA + AMP + H(+). In terms of biological role, required for the formation of a threonylcarbamoyl group on adenosine at position 37 (t(6)A37) in tRNAs that read codons beginning with adenine. Is involved in the transfer of the threonylcarbamoyl moiety of threonylcarbamoyl-AMP (TC-AMP) to the N6 group of A37, together with TsaE and TsaB. TsaD likely plays a direct catalytic role in this reaction. The protein is tRNA N6-adenosine threonylcarbamoyltransferase of Francisella tularensis subsp. holarctica (strain LVS).